Consider the following 374-residue polypeptide: Probable plastid-lipid-associated protein 3, chloroplastic (374 aa).

Residues 1-46 constitute a chloroplast transit peptide; it reads MAMPPPLFAAASHASLLLPSPTIHSSTGSRRPFRLPLRSSRRPPVA. Residues 19–148 form a disordered region; it reads PSPTIHSSTG…EDNEEERREE (130 aa). Over residues 28-54 the composition is skewed to low complexity; that stretch reads GSRRPFRLPLRSSRRPPVAAAAASGVP. Pro residues-rich tracts occupy residues 64–73 and 127–136; these read APEPPSQPDP and PAPPPPPPPV.

Belongs to the PAP/fibrillin family.

The protein resides in the plastid. Its subcellular location is the chloroplast. The polypeptide is Probable plastid-lipid-associated protein 3, chloroplastic (PAP3) (Oryza sativa subsp. japonica (Rice)).